The primary structure comprises 403 residues: Casein kinase II subunit alpha-2 (403 aa).

An N-terminal signal peptide occupies residues 1 to 31; that stretch reads MHLIFFFSYFLRRYLLLLCAILILRAPLAHS. A Protein kinase domain is found at 104–389; the sequence is YEVVRKVGRG…AKEAMAHPYF (286 aa). ATP is bound by residues 110–118 and lysine 133; that span reads VGRGKYSEV. Asparagine 182 is a glycosylation site (N-linked (GlcNAc...) asparagine). Aspartate 221 (proton acceptor) is an active-site residue.

Belongs to the protein kinase superfamily. Ser/Thr protein kinase family. CK2 subfamily. Heterotetramer of two catalytic alpha subunits and two regulatory beta subunits. In terms of tissue distribution, seems to be present in all plant organs. But seems to be more expressed than CKA1.

Its subcellular location is the nucleus. It localises to the nucleolus. It carries out the reaction L-seryl-[protein] + ATP = O-phospho-L-seryl-[protein] + ADP + H(+). The enzyme catalyses L-threonyl-[protein] + ATP = O-phospho-L-threonyl-[protein] + ADP + H(+). Casein kinases are operationally defined by their preferential utilization of acidic proteins such as caseins as substrates. The alpha chain contains the catalytic site. The tetrameric holoenzyme CK2, composed of two alpha and two beta subunits, phosphorylates the transcription factor PIF1 after an exposure to light, resulting in a proteasome-dependent degradation of PIF1 and promotion of photomorphogenesis. CK2 phosphorylates translation initiation factors. May participate in the regulation of the initiation of translation. Acts as circadian clock component that maintains the correct period length through phosphorylation of CCA1. May act as an ectokinase that phosphorylates several extracellular proteins. This is Casein kinase II subunit alpha-2 from Arabidopsis thaliana (Mouse-ear cress).